Reading from the N-terminus, the 693-residue chain is Tegument protein UL47 (693 aa).

Disordered stretches follow at residues 1–32 (MSAR…DGVG) and 48–126 (ELEA…GYLG). Acidic residues predominate over residues 48–57 (ELEALEEMAG). The interval 50–75 (EALEEMAGDEPPVRRRREGPRARRRR) is RNA-binding. Residues 63–75 (RRRREGPRARRRR) carry the Nuclear localization signal motif. Residues 63–75 (RRRREGPRARRRR) are compositionally biased toward basic residues. A Nuclear export signal motif is present at residues 647–670 (SVLGPGVRVVDIMSQFRKLLMGDE).

It belongs to the alphaherpesvirinae HHV-1 UL47 family. Interacts with US3 kinase. Interacts with UL31 and UL34; these interactions seem important for efficient virion nuclear egress. Interacts with UL41/VHS. Phosphorylated by US3. This phosphorylation is required for proper nuclear localization.

It is found in the virion tegument. Its subcellular location is the host nucleus. It localises to the host cytoplasm. In terms of biological role, tegument protein that can bind to various RNA transcripts. Plays a role in the attenuation of selective viral and cellular mRNA degradation by modulating the activity of host shutoff RNase UL41/VHS. Also plays a role in the primary envelopment of virions in the perinuclear space, probably by interacting with two nuclear egress proteins UL31 and UL34. This Human herpesvirus 1 (strain F) (HHV-1) protein is Tegument protein UL47.